Reading from the N-terminus, the 309-residue chain is Homoserine O-succinyltransferase (309 aa).

Cysteine 142 serves as the catalytic Acyl-thioester intermediate. Residues lysine 163 and serine 192 each contribute to the substrate site. The active-site Proton acceptor is the histidine 235. Residue glutamate 237 is part of the active site. Arginine 249 contributes to the substrate binding site.

Belongs to the MetA family. Homodimer.

Its subcellular location is the cytoplasm. The enzyme catalyses L-homoserine + succinyl-CoA = O-succinyl-L-homoserine + CoA. The protein operates within amino-acid biosynthesis; L-methionine biosynthesis via de novo pathway; O-succinyl-L-homoserine from L-homoserine: step 1/1. In terms of biological role, transfers a succinyl group from succinyl-CoA to L-homoserine, forming succinyl-L-homoserine. This is Homoserine O-succinyltransferase from Salmonella gallinarum (strain 287/91 / NCTC 13346).